The sequence spans 270 residues: Mediator of RNA polymerase II transcription subunit 4 (270 aa).

The tract at residues 1 to 25 (MAAASSGEKEKERPGGGLGAAGGNS) is disordered. N-acetylalanine is present on alanine 2. 2 coiled-coil regions span residues 24 to 48 (NSTR…IEML) and 90 to 131 (HHEM…AKEK). Serine 32 bears the Phosphoserine mark. The interval 231 to 270 (MLPPNHSHDFLLEPPGHNKENEDDVEVMSTDSSSSSSDSD) is disordered. A compositionally biased stretch (basic and acidic residues) spans 236-250 (HSHDFLLEPPGHNKE). Positions 259–270 (STDSSSSSSDSD) are enriched in low complexity.

Belongs to the Mediator complex subunit 4 family. In terms of assembly, component of the Mediator complex, which is composed of MED1, MED4, MED6, MED7, MED8, MED9, MED10, MED11, MED12, MED13, MED13L, MED14, MED15, MED16, MED17, MED18, MED19, MED20, MED21, MED22, MED23, MED24, MED25, MED26, MED27, MED29, MED30, MED31, CCNC, CDK8 and CDC2L6/CDK11. The MED12, MED13, CCNC and CDK8 subunits form a distinct module termed the CDK8 module. Mediator containing the CDK8 module is less active than Mediator lacking this module in supporting transcriptional activation. Individual preparations of the Mediator complex lacking one or more distinct subunits have been variously termed ARC, CRSP, DRIP, PC2, SMCC and TRAP.

It is found in the nucleus. Component of the Mediator complex, a coactivator involved in the regulated transcription of nearly all RNA polymerase II-dependent genes. Mediator functions as a bridge to convey information from gene-specific regulatory proteins to the basal RNA polymerase II transcription machinery. Mediator is recruited to promoters by direct interactions with regulatory proteins and serves as a scaffold for the assembly of a functional preinitiation complex with RNA polymerase II and the general transcription factors. The protein is Mediator of RNA polymerase II transcription subunit 4 (MED4) of Bos taurus (Bovine).